Reading from the N-terminus, the 322-residue chain is Acetyl-coenzyme A carboxylase carboxyl transferase subunit alpha (322 aa).

The region spanning 30-293 is the CoA carboxyltransferase C-terminal domain; that stretch reads AVDISAEILR…KKALQDSLKL (264 aa).

This sequence belongs to the AccA family. Acetyl-CoA carboxylase is a heterohexamer composed of biotin carboxyl carrier protein (AccB), biotin carboxylase (AccC) and two subunits each of ACCase subunit alpha (AccA) and ACCase subunit beta (AccD).

The protein resides in the cytoplasm. It carries out the reaction N(6)-carboxybiotinyl-L-lysyl-[protein] + acetyl-CoA = N(6)-biotinyl-L-lysyl-[protein] + malonyl-CoA. The protein operates within lipid metabolism; malonyl-CoA biosynthesis; malonyl-CoA from acetyl-CoA: step 1/1. Functionally, component of the acetyl coenzyme A carboxylase (ACC) complex. First, biotin carboxylase catalyzes the carboxylation of biotin on its carrier protein (BCCP) and then the CO(2) group is transferred by the carboxyltransferase to acetyl-CoA to form malonyl-CoA. This is Acetyl-coenzyme A carboxylase carboxyl transferase subunit alpha from Nitrosospira multiformis (strain ATCC 25196 / NCIMB 11849 / C 71).